The primary structure comprises 769 residues: Cap-specific mRNA (nucleoside-2'-O-)-methyltransferase 2 (769 aa).

Residues 109-322 (ELCTQAWCKF…VYVVCLYYKG (214 aa)) enclose the Adrift-type SAM-dependent 2'-O-MTase domain. Lysine 117 is an active-site residue. Glycine 148, tryptophan 167, and aspartate 235 together coordinate S-adenosyl-L-methionine. Aspartate 235 is an active-site residue. The active-site Proton acceptor is lysine 275.

It localises to the nucleus. The protein localises to the cytoplasm. It carries out the reaction a 5'-end (N(7)-methyl 5'-triphosphoguanosine)-(2'-O-methyl-ribonucleoside)-(ribonucleotide) in mRNA + S-adenosyl-L-methionine = a 5'-end (N(7)-methyl 5'-triphosphoguanosine)-(2'-O-methyl-ribonucleoside)-(2'-O-methyl-ribonucleotide) in mRNA + S-adenosyl-L-homocysteine + H(+). Functionally, S-adenosyl-L-methionine-dependent methyltransferase that mediates mRNA cap2 2'-O-ribose methylation to the 5'-cap structure of mRNAs. Methylates the ribose of the second nucleotide of a m(7)GpppG-capped mRNA and small nuclear RNA (snRNA) (cap0) to produce m(7)GpppRmpNm (cap2). Recognizes a guanosine cap on RNA independently of its N(7) methylation status. Display cap2 methylation on both cap0 and cap1. Displays a preference for cap1 RNAs. This Pongo abelii (Sumatran orangutan) protein is Cap-specific mRNA (nucleoside-2'-O-)-methyltransferase 2 (CMTR2).